Reading from the N-terminus, the 128-residue chain is Anti-sigma-F factor antagonist RsfA (128 aa).

Residues L17–T128 enclose the STAS domain. C73 and C109 form a disulfide bridge.

This sequence belongs to the anti-sigma-factor antagonist family. In terms of assembly, monomer. Interacts with anti-sigma-F factor RsbW (UsfX).

In terms of biological role, positive, redox-sensitive regulator of sigma-F (SigF) activity. When reduced binds to anti-sigma-F factor RsbW (UsfX) preventing its binding to SigF, thus activating transcription. The chain is Anti-sigma-F factor antagonist RsfA (rsfA) from Mycobacterium tuberculosis (strain CDC 1551 / Oshkosh).